Here is a 352-residue protein sequence, read N- to C-terminus: DNA integrity scanning protein DisA (352 aa).

The region spanning 3–143 (PQELIEKIKL…NYKYVVNQVD (141 aa)) is the DAC domain. Residues Gly71, Leu89, and 102–106 (TRHRT) contribute to the ATP site.

It belongs to the DisA family. Homooctamer. Requires Mg(2+) as cofactor.

The enzyme catalyses 2 ATP = 3',3'-c-di-AMP + 2 diphosphate. Functionally, participates in a DNA-damage check-point. DisA forms globular foci that rapidly scan along the chromosomes searching for lesions. Its function is as follows. Also has diadenylate cyclase activity, catalyzing the condensation of 2 ATP molecules into cyclic di-AMP (c-di-AMP). c-di-AMP likely acts as a signaling molecule that may couple DNA integrity with a cellular process. The sequence is that of DNA integrity scanning protein DisA from Thermotoga petrophila (strain ATCC BAA-488 / DSM 13995 / JCM 10881 / RKU-1).